The sequence spans 175 residues: Protein MAL2 (175 aa).

The Cytoplasmic segment spans residues 1–33 (MSAGGAVPPPPNPAVSFPAPRVTLPAGPDILRT). The MARVEL domain occupies 30–174 (ILRTYSGAFV…SLGLALRRWR (145 aa)). A helical transmembrane segment spans residues 34–54 (YSGAFVCLEIVLGGLVWILVA). Residues 55 to 65 (SSNVPLPLLQG) are Lumenal-facing. A helical membrane pass occupies residues 66–86 (WVMFVSVTAFFFSLLFLGLFL). The Cytoplasmic portion of the chain corresponds to 87-101 (SGMVTQIDANWNFLD). The chain crosses the membrane as a helical span at residues 102-122 (FVYHFIVFVFYFGAFLLEAAA). Over 123-148 (TSLHDLQCNTTMTVKPLLNDNQYNIN) the chain is Lumenal. Asn-131 is a glycosylation site (N-linked (GlcNAc...) asparagine). A helical transmembrane segment spans residues 149-169 (VAATVFAFMTTACYGCSLGLA). Residues 170-175 (LRRWRP) are Cytoplasmic-facing.

The protein belongs to the MAL family. As to quaternary structure, interacts with TPD52L2.

The protein localises to the cell membrane. The protein resides in the apical cell membrane. Its function is as follows. Member of the machinery of polarized transport. Required for the indirect transcytotic route at the step of the egress of the transcytosing cargo from perinuclear endosomes in order for it to travel to the apical surface via a raft-dependent pathway. The polypeptide is Protein MAL2 (Mal2) (Mus musculus (Mouse)).